The following is a 238-amino-acid chain: Putative tyrosine-protein phosphatase OCA1 (238 aa).

A disordered region spans residues 1 to 43 (MTSKVGEYEDVPEDESRLTEENVSVPEEEVEDEDEEEDDDDDH). Position 2 is an N-acetylthreonine (Thr2). Ser24 carries the phosphoserine modification. The segment covering 26–42 (PEEEVEDEDEEEDDDDD) has biased composition (acidic residues). The Tyrosine-protein phosphatase domain maps to 72 to 230 (NFCPVERYLY…LVKIDKNKAP (159 aa)). Cys168 functions as the Phosphocysteine intermediate in the catalytic mechanism.

The protein belongs to the protein-tyrosine phosphatase family.

It is found in the cytoplasm. It carries out the reaction O-phospho-L-tyrosyl-[protein] + H2O = L-tyrosyl-[protein] + phosphate. Putative tyrosine-protein phosphatase required for protection against superoxide stress. Involved in cell-cycle delay in response to linoleic acid hydroperoxide (LoaOOH). The polypeptide is Putative tyrosine-protein phosphatase OCA1 (OCA1) (Saccharomyces cerevisiae (strain YJM789) (Baker's yeast)).